A 933-amino-acid chain; its full sequence is Progesterone receptor (933 aa).

The tract at residues Met1–Leu164 is AF3; mediates transcriptional activation. Residues Met1–Val256 form a disordered region. The segment at Met1–Ile566 is modulating, Pro-Rich. The residue at position 20 (Ser20) is a Phosphoserine. The LXXL motif 1 motif lies at Leu55 to Leu59. Phosphoserine is present on Ser81. Residues Leu115–Leu119 carry the LXXL motif 2 motif. Phosphoserine is present on residues Ser130 and Ser162. The segment at Met165–His305 is mediates transcriptional transrepression. The Nuclear localization signal signature appears at Lys183–Arg187. Ser190 and Ser213 each carry phosphoserine. A compositionally biased stretch (acidic residues) spans Glu220 to Glu231. Positions Ser232 to Gly246 are enriched in low complexity. The residue at position 294 (Ser294) is a Phosphoserine; by MAPK1. The interval Gly331–Ser378 is disordered. Positions Ala335–Ser350 are enriched in low complexity. Position 345 is a phosphoserine; by MAPK (Ser345). A Glycyl lysine isopeptide (Lys-Gly) (interchain with G-Cter in SUMO); alternate cross-link involves residue Lys388. Lys388 is covalently cross-linked (Glycyl lysine isopeptide (Lys-Gly) (interchain with G-Cter in ubiquitin); alternate). Ser400 bears the Phosphoserine; by CDK2 mark. Positions Pro415–Ser452 are disordered. The segment covering Pro418–Arg433 has biased composition (pro residues). Low complexity predominate over residues Pro434–Ser452. Positions Ser456 to Arg546 are AF1; mediates transcriptional activation. Lys531 participates in a covalent cross-link: Glycyl lysine isopeptide (Lys-Gly) (interchain with G-Cter in SUMO). 2 consecutive NR C4-type zinc fingers follow at residues Cys567–Cys587 and Cys603–Cys627. The segment at residues Cys567–Phe639 is a DNA-binding region (nuclear receptor). A Phosphoserine modification is found at Ser676. Residues Gln679–Ile913 form the NR LBD domain. Residues Leu687–Lys933 form an AF2; mediates transcriptional activation region. Arg766 contributes to the progesterone binding site.

It belongs to the nuclear hormone receptor family. Interacts with SMARD1 and UNC45A. Interacts with CUEDC2; the interaction promotes ubiquitination, decreases sumoylation, and represses transcriptional activity. Interacts with PIAS3; the interaction promotes sumoylation of PR in a hormone-dependent manner, inhibits DNA-binding, and alters nuclear export. Interacts with SP1; the interaction requires ligand-induced phosphorylation on Ser-345 by ERK1/2-MAPK. Interacts with PRMT2. Interacts with NCOA2 and NCOA1. Interacts with KLF9. Interacts with GTF2B. In terms of processing, phosphorylated on multiple serine sites. Several of these sites are hormone-dependent. Phosphorylation on Ser-294 is highly hormone-dependent and modulates ubiquitination and sumoylation on Lys-388. Phosphorylation on Ser-102 and Ser-345 also requires induction by hormone. Basal phosphorylation on Ser-81, Ser-162, Ser-190 and Ser-400 is increased in response to progesterone and can be phosphorylated in vitro by the CDK2-A1 complex. Increased levels of phosphorylation on Ser-400 also in the presence of EGF, heregulin, IGF, PMA and FBS. Phosphorylation at this site by CDK2 is ligand-independent, and increases nuclear translocation and transcriptional activity. Phosphorylation at Ser-162 and Ser-294, but not at Ser-190, is impaired during the G(2)/M phase of the cell cycle. Phosphorylation on Ser-345 by ERK1/2 MAPK is required for interaction with SP1. Post-translationally, sumoylation is hormone-dependent and represses transcriptional activity. Sumoylation on all three sites is enhanced by PIAS3. Desumoylated by SENP1. Sumoylation on Lys-388, the main site of sumoylation, is repressed by ubiquitination on the same site, and modulated by phosphorylation at Ser-294. Ubiquitination is hormone-dependent and represses sumoylation on the same site. Promoted by MAPK-mediated phosphorylation on Ser-294. Ubiquitinated by UBR5, leading to its degradation: UBR5 specifically recognizes and binds ligand-bound PGR when it is not associated with coactivators (NCOAs). In presence of NCOAs, the UBR5-degron is not accessible, preventing its ubiquitination and degradation. In terms of processing, palmitoylated by ZDHHC7 and ZDHHC21. Palmitoylation is required for plasma membrane targeting and for rapid intracellular signaling via ERK and AKT kinases and cAMP generation.

It localises to the nucleus. The protein resides in the cytoplasm. Its function is as follows. The steroid hormones and their receptors are involved in the regulation of eukaryotic gene expression and affect cellular proliferation and differentiation in target tissues. Transcriptional activator of several progesteron-dependent promoters in a variety of cell types. Involved in activation of SRC-dependent MAPK signaling on hormone stimulation. The chain is Progesterone receptor (PGR) from Pan paniscus (Pygmy chimpanzee).